The primary structure comprises 118 residues: Large ribosomal subunit protein bL19 (118 aa).

The protein belongs to the bacterial ribosomal protein bL19 family.

Functionally, this protein is located at the 30S-50S ribosomal subunit interface and may play a role in the structure and function of the aminoacyl-tRNA binding site. The sequence is that of Large ribosomal subunit protein bL19 from Campylobacter jejuni subsp. doylei (strain ATCC BAA-1458 / RM4099 / 269.97).